A 489-amino-acid chain; its full sequence is Putative ATP-dependent RNA helicase T26G10.1 (489 aa).

The short motif at 44-72 (KSFAELGVSQPLCDACQRLGWMKPSKIQQ) is the Q motif element. The 172-residue stretch at 75 to 246 (LPHALQGKDV…RASLRDPARV (172 aa)) folds into the Helicase ATP-binding domain. An ATP-binding site is contributed by 88 to 95 (AETGSGKT). A DEAD box motif is present at residues 194-197 (DEAD). Residues 257–417 (NLKQHYIFVP…EYKCVENEVM (161 aa)) form the Helicase C-terminal domain. The tract at residues 433 to 489 (EMKEMDEKKKSGKKRRQNDDFGDTEESGGRFKMGIKSMGGRGGSGGGRGGKKKKMSK) is disordered. Gly residues predominate over residues 469 to 480 (SMGGRGGSGGGR).

It belongs to the DEAD box helicase family. DDX47/RRP3 subfamily.

Its subcellular location is the nucleus. It carries out the reaction ATP + H2O = ADP + phosphate + H(+). Its function is as follows. Probable ATP-dependent RNA helicase which may be involved in ribosome biogenesis. This is Putative ATP-dependent RNA helicase T26G10.1 from Caenorhabditis elegans.